The sequence spans 212 residues: ATP phosphoribosyltransferase (212 aa).

It belongs to the ATP phosphoribosyltransferase family. Short subfamily. As to quaternary structure, heteromultimer composed of HisG and HisZ subunits.

The protein localises to the cytoplasm. It carries out the reaction 1-(5-phospho-beta-D-ribosyl)-ATP + diphosphate = 5-phospho-alpha-D-ribose 1-diphosphate + ATP. Its pathway is amino-acid biosynthesis; L-histidine biosynthesis; L-histidine from 5-phospho-alpha-D-ribose 1-diphosphate: step 1/9. Catalyzes the condensation of ATP and 5-phosphoribose 1-diphosphate to form N'-(5'-phosphoribosyl)-ATP (PR-ATP). Has a crucial role in the pathway because the rate of histidine biosynthesis seems to be controlled primarily by regulation of HisG enzymatic activity. In Geobacter metallireducens (strain ATCC 53774 / DSM 7210 / GS-15), this protein is ATP phosphoribosyltransferase.